We begin with the raw amino-acid sequence, 122 residues long: Large ribosomal subunit protein uL14 (122 aa).

The protein belongs to the universal ribosomal protein uL14 family. As to quaternary structure, part of the 50S ribosomal subunit. Forms a cluster with proteins L3 and L19. In the 70S ribosome, L14 and L19 interact and together make contacts with the 16S rRNA in bridges B5 and B8.

Functionally, binds to 23S rRNA. Forms part of two intersubunit bridges in the 70S ribosome. This Francisella tularensis subsp. holarctica (strain LVS) protein is Large ribosomal subunit protein uL14.